A 992-amino-acid chain; its full sequence is Presequence protease, mitochondrial (992 aa).

The transit peptide at methionine 1–glycine 30 directs the protein to the mitochondrion. Histidine 91 contributes to the Zn(2+) binding site. The Proton acceptor role is filled by glutamate 94. Position 95 (histidine 95) interacts with Zn(2+). Glutamate 167 is a catalytic residue. Residue glutamate 192 participates in Zn(2+) binding.

Belongs to the peptidase M16 family. PreP subfamily. In terms of assembly, monomer and homodimer; homodimerization is induced by binding of the substrate. Zn(2+) is required as a cofactor.

The protein resides in the mitochondrion intermembrane space. The protein localises to the mitochondrion matrix. Its function is as follows. Degrades mitochondrial transit peptides after their cleavage in the intermembrane space or in the matrix, and presequence peptides; clearance of these peptides is required to keep the presequence processing machinery running. Preferentially cleaves the N-terminal side of paired basic amino acid residues. Also degrades other unstructured peptides. May function as an ATP-dependent peptidase as opposed to a metalloendopeptidase. The chain is Presequence protease, mitochondrial (cym1) from Schizosaccharomyces pombe (strain 972 / ATCC 24843) (Fission yeast).